Reading from the N-terminus, the 379-residue chain is Chaperone protein DnaJ (379 aa).

One can recognise a J domain in the interval 5–71 (DYYEILGVSR…EKRAMYDRFG (67 aa)). The segment at 149–231 (GTTIPIEYDR…CGGSGRIRKR (83 aa)) adopts a CR-type zinc-finger fold. Zn(2+)-binding residues include C162, C165, C179, C182, C205, C208, C219, and C222. CXXCXGXG motif repeat units follow at residues 162–169 (CSHCNGEG), 179–186 (CPKCHGTG), 205–212 (CNQCGGTG), and 219–226 (CHVCGGSG).

This sequence belongs to the DnaJ family. As to quaternary structure, homodimer. Zn(2+) is required as a cofactor.

Its subcellular location is the cytoplasm. In terms of biological role, participates actively in the response to hyperosmotic and heat shock by preventing the aggregation of stress-denatured proteins and by disaggregating proteins, also in an autonomous, DnaK-independent fashion. Unfolded proteins bind initially to DnaJ; upon interaction with the DnaJ-bound protein, DnaK hydrolyzes its bound ATP, resulting in the formation of a stable complex. GrpE releases ADP from DnaK; ATP binding to DnaK triggers the release of the substrate protein, thus completing the reaction cycle. Several rounds of ATP-dependent interactions between DnaJ, DnaK and GrpE are required for fully efficient folding. Also involved, together with DnaK and GrpE, in the DNA replication of plasmids through activation of initiation proteins. This chain is Chaperone protein DnaJ, found in Thermosipho africanus (strain TCF52B).